A 283-amino-acid chain; its full sequence is Pantothenate synthetase (283 aa).

30 to 37 is a binding site for ATP; it reads MGNLHDGH. H37 (proton donor) is an active-site residue. Q61 contributes to the (R)-pantoate binding site. Q61 is a beta-alanine binding site. Position 149–152 (149–152) interacts with ATP; sequence GEKD. Q155 lines the (R)-pantoate pocket. 186-189 lines the ATP pocket; that stretch reads LSSR.

It belongs to the pantothenate synthetase family. Homodimer.

The protein resides in the cytoplasm. It catalyses the reaction (R)-pantoate + beta-alanine + ATP = (R)-pantothenate + AMP + diphosphate + H(+). Its pathway is cofactor biosynthesis; (R)-pantothenate biosynthesis; (R)-pantothenate from (R)-pantoate and beta-alanine: step 1/1. Catalyzes the condensation of pantoate with beta-alanine in an ATP-dependent reaction via a pantoyl-adenylate intermediate. The sequence is that of Pantothenate synthetase from Escherichia coli O127:H6 (strain E2348/69 / EPEC).